We begin with the raw amino-acid sequence, 332 residues long: D-alanine--D-alanine ligase (332 aa).

One can recognise an ATP-grasp domain in the interval 124–329 (KMWFSALNIP…FPDYLLSNIN (206 aa)). 154–209 (ALVNWGSIFVKAASQGSSVGCYRIDNQEDVASTLAQAFTYSDYVIVEKTISARELE) serves as a coordination point for ATP. Positions 283, 296, and 298 each coordinate Mg(2+).

The protein belongs to the D-alanine--D-alanine ligase family. Requires Mg(2+) as cofactor. It depends on Mn(2+) as a cofactor.

Its subcellular location is the cytoplasm. It carries out the reaction 2 D-alanine + ATP = D-alanyl-D-alanine + ADP + phosphate + H(+). It participates in cell wall biogenesis; peptidoglycan biosynthesis. Cell wall formation. The protein is D-alanine--D-alanine ligase of Shewanella piezotolerans (strain WP3 / JCM 13877).